The primary structure comprises 163 residues: Transcription elongation factor GreB (163 aa).

Belongs to the GreA/GreB family. GreB subfamily.

Its function is as follows. Necessary for efficient RNA polymerase transcription elongation past template-encoded arresting sites. The arresting sites in DNA have the property of trapping a certain fraction of elongating RNA polymerases that pass through, resulting in locked ternary complexes. Cleavage of the nascent transcript by cleavage factors such as GreA or GreB allows the resumption of elongation from the new 3'terminus. GreB releases sequences of up to 9 nucleotides in length. This Vibrio parahaemolyticus serotype O3:K6 (strain RIMD 2210633) protein is Transcription elongation factor GreB.